The primary structure comprises 682 residues: Elongation factor G (682 aa).

The tr-type G domain maps to Gln-8 to Val-282. GTP-binding positions include Ala-17–Thr-24, Asp-81–His-85, and Asn-135–Asp-138.

This sequence belongs to the TRAFAC class translation factor GTPase superfamily. Classic translation factor GTPase family. EF-G/EF-2 subfamily.

The protein localises to the cytoplasm. In terms of biological role, catalyzes the GTP-dependent ribosomal translocation step during translation elongation. During this step, the ribosome changes from the pre-translocational (PRE) to the post-translocational (POST) state as the newly formed A-site-bound peptidyl-tRNA and P-site-bound deacylated tRNA move to the P and E sites, respectively. Catalyzes the coordinated movement of the two tRNA molecules, the mRNA and conformational changes in the ribosome. This chain is Elongation factor G, found in Malacoplasma penetrans (strain HF-2) (Mycoplasma penetrans).